The primary structure comprises 165 residues: Endoribonuclease YbeY (165 aa).

Residues His130, His134, and His140 each contribute to the Zn(2+) site.

The protein belongs to the endoribonuclease YbeY family. Requires Zn(2+) as cofactor.

It localises to the cytoplasm. Functionally, single strand-specific metallo-endoribonuclease involved in late-stage 70S ribosome quality control and in maturation of the 3' terminus of the 16S rRNA. The chain is Endoribonuclease YbeY from Streptococcus pyogenes serotype M28 (strain MGAS6180).